The sequence spans 340 residues: uncharacterized protein (340 aa).

The first 23 residues, 1 to 23 (MQKKVLSLVLVLAVLESIVPVSA), serve as a signal peptide directing secretion.

This is an uncharacterized protein from Archaeoglobus fulgidus (strain ATCC 49558 / DSM 4304 / JCM 9628 / NBRC 100126 / VC-16).